Here is a 269-residue protein sequence, read N- to C-terminus: Formamidopyrimidine-DNA glycosylase (269 aa).

Residue Pro2 is the Schiff-base intermediate with DNA of the active site. Glu3 (proton donor) is an active-site residue. Catalysis depends on Lys57, which acts as the Proton donor; for beta-elimination activity. Residues His90, Arg109, and Lys150 each contribute to the DNA site. The segment at 235–269 (QVYGRAGELCRRCGNVIEIAKHGQRSTFFCRHCQH) adopts an FPG-type zinc-finger fold. Catalysis depends on Arg259, which acts as the Proton donor; for delta-elimination activity.

Belongs to the FPG family. In terms of assembly, monomer. Requires Zn(2+) as cofactor.

The catalysed reaction is Hydrolysis of DNA containing ring-opened 7-methylguanine residues, releasing 2,6-diamino-4-hydroxy-5-(N-methyl)formamidopyrimidine.. The enzyme catalyses 2'-deoxyribonucleotide-(2'-deoxyribose 5'-phosphate)-2'-deoxyribonucleotide-DNA = a 3'-end 2'-deoxyribonucleotide-(2,3-dehydro-2,3-deoxyribose 5'-phosphate)-DNA + a 5'-end 5'-phospho-2'-deoxyribonucleoside-DNA + H(+). Involved in base excision repair of DNA damaged by oxidation or by mutagenic agents. Acts as a DNA glycosylase that recognizes and removes damaged bases. Has a preference for oxidized purines, such as 7,8-dihydro-8-oxoguanine (8-oxoG). Has AP (apurinic/apyrimidinic) lyase activity and introduces nicks in the DNA strand. Cleaves the DNA backbone by beta-delta elimination to generate a single-strand break at the site of the removed base with both 3'- and 5'-phosphates. The protein is Formamidopyrimidine-DNA glycosylase of Yersinia enterocolitica serotype O:8 / biotype 1B (strain NCTC 13174 / 8081).